A 452-amino-acid chain; its full sequence is Sodium-coupled neutral amino acid transporter 7 (452 aa).

The next 11 helical transmembrane spans lie at 46 to 66, 74 to 94, 120 to 140, 168 to 188, 195 to 215, 234 to 256, 272 to 292, 309 to 329, 361 to 381, 385 to 405, and 419 to 439; these read AVFI…PAAF, AAIS…VILA, LCEV…FIII, FTIS…REIS, FLSV…CIWP, VFNA…PVYG, IAMF…FLLF, IAVA…YPIL, VLQT…IPDI, ISLI…LCLI, and SWWA…FIFG.

It belongs to the amino acid/polyamine transporter 2 family.

The protein resides in the lysosome membrane. The protein localises to the cell projection. It localises to the axon. It catalyses the reaction L-asparagine(in) + Na(+)(in) = L-asparagine(out) + Na(+)(out). The enzyme catalyses L-glutamine(in) + Na(+)(in) = L-glutamine(out) + Na(+)(out). In terms of biological role, symporter that selectively cotransports sodium ions and amino acids, such as L-glutamine and L-asparagine from the lysosome into the cytoplasm and may participates in mTORC1 activation. The transport activity requires an acidic lysosomal lumen. This Xenopus laevis (African clawed frog) protein is Sodium-coupled neutral amino acid transporter 7.